Here is a 338-residue protein sequence, read N- to C-terminus: Glycerol-3-phosphate dehydrogenase [NAD(P)+] (338 aa).

The NADPH site is built by S12, W13, and K110. Sn-glycerol 3-phosphate is bound by residues K110, G141, and S143. A145 provides a ligand contact to NADPH. Residues K196, D249, S259, R260, and N261 each contribute to the sn-glycerol 3-phosphate site. K196 functions as the Proton acceptor in the catalytic mechanism. R260 contacts NADPH. 2 residues coordinate NADPH: V284 and E286.

It belongs to the NAD-dependent glycerol-3-phosphate dehydrogenase family.

Its subcellular location is the cytoplasm. The catalysed reaction is sn-glycerol 3-phosphate + NAD(+) = dihydroxyacetone phosphate + NADH + H(+). It carries out the reaction sn-glycerol 3-phosphate + NADP(+) = dihydroxyacetone phosphate + NADPH + H(+). The protein operates within membrane lipid metabolism; glycerophospholipid metabolism. Functionally, catalyzes the reduction of the glycolytic intermediate dihydroxyacetone phosphate (DHAP) to sn-glycerol 3-phosphate (G3P), the key precursor for phospholipid synthesis. The polypeptide is Glycerol-3-phosphate dehydrogenase [NAD(P)+] (Pediococcus pentosaceus (strain ATCC 25745 / CCUG 21536 / LMG 10740 / 183-1w)).